A 576-amino-acid chain; its full sequence is Proline--tRNA ligase (576 aa).

It belongs to the class-II aminoacyl-tRNA synthetase family. ProS type 1 subfamily. As to quaternary structure, homodimer.

It localises to the cytoplasm. The enzyme catalyses tRNA(Pro) + L-proline + ATP = L-prolyl-tRNA(Pro) + AMP + diphosphate. Catalyzes the attachment of proline to tRNA(Pro) in a two-step reaction: proline is first activated by ATP to form Pro-AMP and then transferred to the acceptor end of tRNA(Pro). As ProRS can inadvertently accommodate and process non-cognate amino acids such as alanine and cysteine, to avoid such errors it has two additional distinct editing activities against alanine. One activity is designated as 'pretransfer' editing and involves the tRNA(Pro)-independent hydrolysis of activated Ala-AMP. The other activity is designated 'posttransfer' editing and involves deacylation of mischarged Ala-tRNA(Pro). The misacylated Cys-tRNA(Pro) is not edited by ProRS. This chain is Proline--tRNA ligase, found in Helicobacter pylori (strain J99 / ATCC 700824) (Campylobacter pylori J99).